Consider the following 190-residue polypeptide: MPVCNNDSQLIGLGVSVTLADDTTVNGTVYTYNSSEGLLVLFQGFSGSNPNVKIIRTPFIKEVTALRDNEEKLPPQLEAKARLPSMQAARDRSLFKHASSQLRNAKDKRNQLLQTDDQKTPIAALDTLIKLERIYPDIHWDKDAGVIRFNQDVVVKGKPDWTSPAVVIAEGAGDISRSLMERVQKTLSKK.

One can recognise a Sm domain in the interval 2 to 69 (PVCNNDSQLI…IKEVTALRDN (68 aa)). The AD domain maps to 84-190 (PSMQAARDRS…ERVQKTLSKK (107 aa)).

Belongs to the LSM12 family. In terms of assembly, forms a complex composed of at least MKT1, PBP1, XAC1 and LSM12. Forms a complex composed of at least MKT1L, PBP1, XAC1 and LSM12. Within the complex, interacts with PBP1; the interaction is direct.

Involved in post-transcriptional regulation of gene expression. The sequence is that of PBP1-interacting protein LSM12 from Trypanosoma brucei brucei (strain 927/4 GUTat10.1).